A 484-amino-acid chain; its full sequence is T-complex protein 1 subunit delta (484 aa).

The protein belongs to the TCP-1 chaperonin family. Component of the T-complex protein 1 (TCP1) complex.

It is found in the cytoplasm. Its function is as follows. Molecular chaperone; assists the folding of proteins upon ATP hydrolysis. The chain is T-complex protein 1 subunit delta (CCT4) from Encephalitozoon cuniculi (strain GB-M1) (Microsporidian parasite).